The sequence spans 62 residues: Keratin-associated protein 6-2 (62 aa).

Belongs to the KRTAP type 6 family. Interacts with hair keratins.

In terms of biological role, in the hair cortex, hair keratin intermediate filaments are embedded in an interfilamentous matrix, consisting of hair keratin-associated proteins (KRTAP), which are essential for the formation of a rigid and resistant hair shaft through their extensive disulfide bond cross-linking with abundant cysteine residues of hair keratins. The matrix proteins include the high-sulfur and high-glycine-tyrosine keratins. In Homo sapiens (Human), this protein is Keratin-associated protein 6-2 (KRTAP6-2).